The chain runs to 444 residues: Type VII secretion system protein EssB (444 aa).

Over Met1–Trp229 the chain is Cytoplasmic. Residues Val230–Phe250 form a helical membrane-spanning segment. The Extracellular segment spans residues Ser251–Lys444. Residues Lys366–Lys444 are disordered. Residues Ser372–Lys444 are compositionally biased toward basic and acidic residues. Positions Leu387–Lys443 form a coiled coil.

This sequence belongs to the EssB family. As to quaternary structure, may oligomerize and interact with other membrane components to form the Ess system. Interacts with EsaA.

It is found in the cell membrane. In terms of biological role, component of the type VII secretion system (Ess). Required for the secretion of EsxA and proper accumulation of EssB and EssD. This chain is Type VII secretion system protein EssB, found in Staphylococcus aureus (strain USA300).